We begin with the raw amino-acid sequence, 51 residues long: Putative antitoxin VapB6 (51 aa).

Antitoxin component of a possible type II toxin-antitoxin (TA) system. The cognate toxin is VapC6. This is Putative antitoxin VapB6 (vapB6) from Mycobacterium tuberculosis (strain CDC 1551 / Oshkosh).